Reading from the N-terminus, the 251-residue chain is Insulin-induced gene 1 protein (251 aa).

The Cytoplasmic segment spans residues 1–58 (MPRLEEHCWSCSCSTSVKTKDLSSAGWIVCKTGEMMSIITSVLSHAYGSLHSLQSANL). The helical transmembrane segment at 59 to 81 (IRRGLVLFIVGVVLALVLNLLQI) threads the bilayer. Residues 82–100 (QRNVTLFPEEVLDTLFSSA) are Extracellular-facing. The helical transmembrane segment at 101–118 (WWIPLCCGTAAAVVGLLY) threads the bilayer. Over 119–133 (PCLDHHLGEPHKFKR) the chain is Cytoplasmic. A helical transmembrane segment spans residues 134-156 (EWASVMRCIAVFVGINHASAKLD). Over 157–159 (FAN) the chain is Extracellular. The chain crosses the membrane as a helical span at residues 160-178 (NVQLSLTLAALSLGLWWTF). At 179–183 (DRSRS) the chain is on the cytoplasmic side. Residues 184 to 205 (GFGLGLTTALLATLIAQLLVYN) traverse the membrane as a helical segment. Residues 206 to 219 (GIYQYTSPDFLYVR) lie on the Extracellular side of the membrane. A helical transmembrane segment spans residues 220 to 237 (SWLPCIFFSGGVTVGNIG). Residues 238–251 (RQLAMGSTEKIHND) are Cytoplasmic-facing. The KxHxx signature appears at 245–251 (TEKIHND).

This sequence belongs to the INSIG family. As to quaternary structure, interacts with scap; interaction is direct and only takes place in the presence of sterols; it prevents interaction between scap and the coat protein complex II (COPII). Associates with the SCAP-SREBP complex; association is mediated via its interaction with scap and only takes place in the presence of sterols.

Its subcellular location is the endoplasmic reticulum membrane. Its function is as follows. Oxysterol-binding protein that mediates feedback control of cholesterol synthesis by controlling both endoplasmic reticulum to Golgi transport of scap and degradation of hmgcr. Acts as a negative regulator of cholesterol biosynthesis by mediating the retention of the SCAP-SREBP complex in the endoplasmic reticulum, thereby blocking the processing of sterol regulatory element-binding proteins (SREBPs). Binds oxysterol, including 25-hydroxycholesterol, regulating interaction with scap and retention of the SCAP-SREBP complex in the endoplasmic reticulum. In presence of oxysterol, interacts with scap, retaining the SCAP-SREBP complex in the endoplasmic reticulum, thereby preventing scap from escorting SREBPs to the Golgi. Sterol deprivation reduces oxysterol-binding, disrupting the interaction between insig1 and scap, thereby promoting Golgi transport of the SCAP-SREBP complex, followed by processing and nuclear translocation of SREBPs. Also regulates cholesterol synthesis by regulating degradation of hmgcr. The sequence is that of Insulin-induced gene 1 protein from Danio rerio (Zebrafish).